Reading from the N-terminus, the 315-residue chain is Adenine deaminase (315 aa).

Zn(2+)-binding residues include histidine 14, histidine 16, and histidine 194. Glutamate 197 serves as the catalytic Proton donor. Residue aspartate 275 participates in Zn(2+) binding. Aspartate 276 contacts substrate.

Belongs to the metallo-dependent hydrolases superfamily. Adenosine and AMP deaminases family. Adenine deaminase type 2 subfamily. It depends on Zn(2+) as a cofactor.

The catalysed reaction is adenine + H2O + H(+) = hypoxanthine + NH4(+). Its function is as follows. Catalyzes the hydrolytic deamination of adenine to hypoxanthine. Plays an important role in the purine salvage pathway and in nitrogen catabolism. The sequence is that of Adenine deaminase from Pseudomonas putida (strain W619).